The following is a 150-amino-acid chain: Large ribosomal subunit protein bL9 (150 aa).

The protein belongs to the bacterial ribosomal protein bL9 family.

Its function is as follows. Binds to the 23S rRNA. The chain is Large ribosomal subunit protein bL9 from Saccharopolyspora erythraea (strain ATCC 11635 / DSM 40517 / JCM 4748 / NBRC 13426 / NCIMB 8594 / NRRL 2338).